The sequence spans 356 residues: Protein trichome birefringence-like 41 (356 aa).

Residues 12–31 (SALVLSLLLLLLLPLLHEAA) form a helical; Signal-anchor for type II membrane protein membrane-spanning segment. The GDS motif motif lies at 107-109 (GDS). The short motif at 333-347 (DCSHWCLSGVPDTWN) is the DCXHWCLPGXXDXWN motif element.

This sequence belongs to the PC-esterase family. TBL subfamily.

The protein localises to the membrane. May act as a bridging protein that binds pectin and other cell wall polysaccharides. Probably involved in maintaining esterification of pectins. May be involved in the specific O-acetylation of cell wall polymers. In Arabidopsis thaliana (Mouse-ear cress), this protein is Protein trichome birefringence-like 41 (TBL41).